A 340-amino-acid chain; its full sequence is Chitinase 2 (340 aa).

Positions 1–32 (MSTPRAAASLAKKAALVALAVLAAALATAARA) are cleaved as a signal peptide. A Chitin-binding type-1 domain is found at 33–73 (EQCGAQAGGARCPNCLCCSRWGWCGTTSDFCGDGCQSQCSG). 8 cysteine pairs are disulfide-bonded: Cys35/Cys50, Cys44/Cys56, Cys47/Cys74, Cys49/Cys63, Cys67/Cys71, Cys110/Cys172, Cys184/Cys192, and Cys291/Cys323. Residue Glu154 is the Proton donor of the active site.

Belongs to the glycosyl hydrolase 19 family. Chitinase class I subfamily. In terms of tissue distribution, expressed in roots, sheaths and meristems.

The enzyme catalyses Random endo-hydrolysis of N-acetyl-beta-D-glucosaminide (1-&gt;4)-beta-linkages in chitin and chitodextrins.. Its function is as follows. Hydrolyzes chitin and plays a role in defense against fungal pathogens containing chitin. Its overexpression confers enhanced resistance to sheath blight pathogen (R.solani). The chain is Chitinase 2 (Cht2) from Oryza sativa subsp. japonica (Rice).